Reading from the N-terminus, the 293-residue chain is Oxidoreductase clz16 (293 aa).

Belongs to the asaB hydroxylase/desaturase family.

It functions in the pathway secondary metabolite biosynthesis. Oxidoreductase; part of the gene cluster that mediates the biosynthesis of squalestatin S1 (SQS1, also known as zaragozic acid A), a heavily oxidized fungal polyketide that offers potent cholesterol lowering activity by targeting squalene synthase (SS). SQS1 is composed of a 2,8-dioxobicyclic[3.2.1]octane-3,4,5-tricarboxyclic acid core that is connected to two lipophilic polyketide arms. These initial steps feature the priming of an unusual benzoic acid starter unit onto the highly reducing polyketide synthase clz14, followed by oxaloacetate extension and product release to generate a tricarboxylic acid containing product. The phenylalanine ammonia lyase (PAL) clz10 and the acyl-CoA ligase clz12 are involved in transforming phenylalanine into benzoyl-CoA. The citrate synthase-like protein clz17 is involved in connecting the C-alpha-carbons of the hexaketide chain and oxaloacetate to afford the tricarboxylic acid unit. The potential hydrolytic enzymes, clz11 and clz13, are in close proximity to pks2 and may participate in product release. On the other side, the tetraketide arm is synthesized by a the squalestatin tetraketide synthase clz2 and enzymatically esterified to the core in the last biosynthetic step, by the acetyltransferase clz6. The biosynthesis of the tetraketide must involve 3 rounds of chain extension. After the first and second rounds methyl-transfer occurs, and in all rounds of extension the ketoreductase and dehydratase are active. The enoyl reductase and C-MeT of clz2 are not active in the final round of extension. The acetyltransferase clz6 appears to have a broad substrate selectivity for its acyl CoA substrate, allowing the in vitro synthesis of novel squalestatins. The biosynthesis of SQS1 requires several oxidative steps likely performed by oxidoreductases clz3, clz15 and clz16. Finally, in support of the identification of the cluster as being responsible for SQS1 production, the cluster contains a gene encoding a putative squalene synthase (SS) clz20, suggesting a likely mechanism for self-resistance. In Cochliobolus lunatus (Filamentous fungus), this protein is Oxidoreductase clz16.